The sequence spans 236 residues: Phosphoribosylaminoimidazole-succinocarboxamide synthase (236 aa).

The protein belongs to the SAICAR synthetase family.

It catalyses the reaction 5-amino-1-(5-phospho-D-ribosyl)imidazole-4-carboxylate + L-aspartate + ATP = (2S)-2-[5-amino-1-(5-phospho-beta-D-ribosyl)imidazole-4-carboxamido]succinate + ADP + phosphate + 2 H(+). It participates in purine metabolism; IMP biosynthesis via de novo pathway; 5-amino-1-(5-phospho-D-ribosyl)imidazole-4-carboxamide from 5-amino-1-(5-phospho-D-ribosyl)imidazole-4-carboxylate: step 1/2. In Streptococcus equi subsp. zooepidemicus (strain MGCS10565), this protein is Phosphoribosylaminoimidazole-succinocarboxamide synthase.